The primary structure comprises 64 residues: Large ribosomal subunit protein bL35 (64 aa).

A disordered region spans residues 1 to 25; sequence MPKLKTHSGAAKRFKKTATGKVKRS.

Belongs to the bacterial ribosomal protein bL35 family.

The protein is Large ribosomal subunit protein bL35 of Koribacter versatilis (strain Ellin345).